A 445-amino-acid polypeptide reads, in one-letter code: Phosphoglucosamine mutase (445 aa).

S102 acts as the Phosphoserine intermediate in catalysis. Mg(2+) is bound by residues S102, D241, D243, and D245. S102 is modified (phosphoserine).

It belongs to the phosphohexose mutase family. Mg(2+) serves as cofactor. Post-translationally, activated by phosphorylation.

It catalyses the reaction alpha-D-glucosamine 1-phosphate = D-glucosamine 6-phosphate. In terms of biological role, catalyzes the conversion of glucosamine-6-phosphate to glucosamine-1-phosphate. The protein is Phosphoglucosamine mutase of Photorhabdus laumondii subsp. laumondii (strain DSM 15139 / CIP 105565 / TT01) (Photorhabdus luminescens subsp. laumondii).